The primary structure comprises 374 residues: Lipid-A-disaccharide synthase (374 aa).

It belongs to the LpxB family.

The catalysed reaction is a lipid X + a UDP-2-N,3-O-bis[(3R)-3-hydroxyacyl]-alpha-D-glucosamine = a lipid A disaccharide + UDP + H(+). It participates in bacterial outer membrane biogenesis; LPS lipid A biosynthesis. Its function is as follows. Condensation of UDP-2,3-diacylglucosamine and 2,3-diacylglucosamine-1-phosphate to form lipid A disaccharide, a precursor of lipid A, a phosphorylated glycolipid that anchors the lipopolysaccharide to the outer membrane of the cell. This chain is Lipid-A-disaccharide synthase, found in Pseudomonas fluorescens (strain ATCC BAA-477 / NRRL B-23932 / Pf-5).